Here is a 308-residue protein sequence, read N- to C-terminus: HTH-type transcriptional activator AllS (308 aa).

The HTH lysR-type domain occupies 2–59; it reads FDPETLRTFISVAETGSFSKAAERLCKTTATTSYRIKLLEENTGVGLFFRTTRSVSLT. Positions 19–38 form a DNA-binding region, H-T-H motif; the sequence is FSKAAERLCKTTATTSYRIK.

Belongs to the LysR transcriptional regulatory family.

Positive regulator essential for the expression of allD operon. Binds to the allD promoter. The polypeptide is HTH-type transcriptional activator AllS (allS) (Salmonella typhi).